The primary structure comprises 377 residues: Putrescine transport ATP-binding protein PotG (377 aa).

One can recognise an ABC transporter domain in the interval 20–250 (LEIRNLTKSY…PTTRYSAEFI (231 aa)). 52 to 59 (GASGCGKS) lines the ATP pocket.

Belongs to the ABC transporter superfamily. In terms of assembly, the complex is composed of two ATP-binding proteins (PotG), two transmembrane proteins (PotH and PotI) and a solute-binding protein (PotF).

The protein resides in the cell inner membrane. The enzyme catalyses putrescine(out) + ATP + H2O = putrescine(in) + ADP + phosphate + H(+). Its activity is regulated as follows. Transport is feedback inhibited by intracellular polyamines. Its function is as follows. Part of the ABC transporter complex PotFGHI involved in putrescine uptake. Responsible for energy coupling to the transport system. Imports putrescine for maintenance of the optimal concentration of polyamines necessary for cell growth in the presence of glucose. The protein is Putrescine transport ATP-binding protein PotG of Escherichia coli (strain K12).